Consider the following 338-residue polypeptide: Glycerol-3-phosphate dehydrogenase [NAD(P)+] (338 aa).

NADPH-binding residues include Ser-14, Tyr-15, His-35, and Lys-109. 3 residues coordinate sn-glycerol 3-phosphate: Lys-109, Gly-138, and Thr-140. Residue Ala-142 coordinates NADPH. 5 residues coordinate sn-glycerol 3-phosphate: Lys-194, Asp-247, Ser-257, Arg-258, and Asn-259. Lys-194 (proton acceptor) is an active-site residue. Arg-258 is a binding site for NADPH. NADPH contacts are provided by Val-282 and Glu-284.

It belongs to the NAD-dependent glycerol-3-phosphate dehydrogenase family.

The protein resides in the cytoplasm. The enzyme catalyses sn-glycerol 3-phosphate + NAD(+) = dihydroxyacetone phosphate + NADH + H(+). It catalyses the reaction sn-glycerol 3-phosphate + NADP(+) = dihydroxyacetone phosphate + NADPH + H(+). Its pathway is membrane lipid metabolism; glycerophospholipid metabolism. Functionally, catalyzes the reduction of the glycolytic intermediate dihydroxyacetone phosphate (DHAP) to sn-glycerol 3-phosphate (G3P), the key precursor for phospholipid synthesis. This is Glycerol-3-phosphate dehydrogenase [NAD(P)+] from Sodalis glossinidius (strain morsitans).